A 172-amino-acid chain; its full sequence is MDRAEKRELVTGLNEAFGNAGSVVVAHYAGITVAQMNDLRSKMRAAGGTVKVAKNRLAKIALQGTDSASIIDLFKGQTLIAYSEDPIAAPKVASDFAKGNDKLVILGGAMGTTSLNADGVKALATLPSLDELRAKLVGMIATPATRIAQIVNAPAASVARVIGAYARKDEAA.

The protein belongs to the universal ribosomal protein uL10 family. Part of the ribosomal stalk of the 50S ribosomal subunit. The N-terminus interacts with L11 and the large rRNA to form the base of the stalk. The C-terminus forms an elongated spine to which L12 dimers bind in a sequential fashion forming a multimeric L10(L12)X complex.

Its function is as follows. Forms part of the ribosomal stalk, playing a central role in the interaction of the ribosome with GTP-bound translation factors. The chain is Large ribosomal subunit protein uL10 from Mesorhizobium japonicum (strain LMG 29417 / CECT 9101 / MAFF 303099) (Mesorhizobium loti (strain MAFF 303099)).